The sequence spans 361 residues: Uroporphyrinogen decarboxylase (361 aa).

Residues 44–48 (RQAGR), Asp93, Tyr168, Ser223, and His337 each bind substrate.

Belongs to the uroporphyrinogen decarboxylase family. Homodimer.

It localises to the cytoplasm. The enzyme catalyses uroporphyrinogen III + 4 H(+) = coproporphyrinogen III + 4 CO2. The protein operates within porphyrin-containing compound metabolism; protoporphyrin-IX biosynthesis; coproporphyrinogen-III from 5-aminolevulinate: step 4/4. Catalyzes the decarboxylation of four acetate groups of uroporphyrinogen-III to yield coproporphyrinogen-III. The chain is Uroporphyrinogen decarboxylase from Thermobifida fusca (strain YX).